We begin with the raw amino-acid sequence, 351 residues long: MKKQHIINETFLDEILAQKLGTTYIPPTEIKDSDFDKAAKHFINLLLRADGLKPIKTAVVHPIDKESLLGAVRAAQFNVIKPILIGPQHKIESVAKVNDVDLENYQVINAEHSHEAAKKAVELAKKREVAAIMKGALHTDELMSAVVYKENGLRTERRISHAFLMAVATFPKPFIITDAAINIRPTLEDKRDIVQNAIDLMHIIKEDKQVRVAVLSAVETVTSAIPTTLDAAALSKMADRGQITNAVVDGPLAFDNAISLFAAEAKGISSPVSGNADILVVPDLESGNMLAKQLKYLGQAVMAGIVLGARVPIILTSRADPIDMRVISCVLASFIYNQTKAKLHNSSKSII.

The protein belongs to the phosphate acetyltransferase and butyryltransferase family.

Its subcellular location is the cytoplasm. It catalyses the reaction acetyl-CoA + phosphate = acetyl phosphate + CoA. The protein operates within metabolic intermediate biosynthesis; acetyl-CoA biosynthesis; acetyl-CoA from acetate: step 2/2. The sequence is that of Phosphate acetyltransferase (pta) from Rickettsia prowazekii (strain Madrid E).